A 784-amino-acid chain; its full sequence is Toll-like receptor 2 (784 aa).

The first 20 residues, 1–20 (MPRALWTAWVWAXIILSTEG), serve as a signal peptide directing secretion. Residues 21 to 587 (ASDQASSLSC…ARLSLSECHR (567 aa)) lie on the Extracellular side of the membrane. Cysteines 30 and 36 form a disulfide. LRR repeat units follow at residues 54–77 (VKSLDLSNNEITYVGNRDLQRCVN), 78–101 (LKTLRLGANEIHTVEEDSFFHLRN), 102–125 (LEYLDLSYNRLSNLSSSWFRSLYV), 126–150 (LKFLNLLGNLYKTLGETSLFSHLPN), 151–175 (LXTLKVGNSNSFTEIHEKDFTGLTF), 176–199 (LEELEISAQNLQIYVPKSLKSIQN), 200–223 (ISHLILHLKQPVLLVDILVDIVSS), 224–250 (LDCLELRDTNLHTFHFSEASISEMSTS), 251–278 (VKKLIFRNVQFTDESFVEVVKLFNYVSG), 279–308 (ILEVEFDDCTHDGIGDFRALSLDRIRHLGN), 309–337 (VETLTIRKLHIPQFFLFHDLSSIYPLTGK), 338–361 (VKRVTIENSKVFLVPCLLSQHLKS), 362–388 (LEYLDLSENLMSEETLKNSACKDAWPF), 389–414 (LQTLVLRQNRLKSLEKTGELLLTLEN), 415–437 (LNSLDISKNNFLSMPETCQWPGK), 438–457 (MKQLNLSSTRIHSLTQCLPQ), 458–478 (TLEILDVSNNNLDSFSLILPQ), 479–500 (LKELYISRNKLKTLPDASFLPV), and 501–524 (LSVMRISRNIINTFSKEQLDSFQQ). N-linked (GlcNAc...) asparagine glycosylation occurs at Asn114. Residue Asn199 is glycosylated (N-linked (GlcNAc...) asparagine). Cys353 and Cys382 are oxidised to a cystine. Residues Cys432 and Cys454 are joined by a disulfide bond. N-linked (GlcNAc...) asparagine glycosylation is present at Asn442. Residues 525–579 (LKTLEAGGNNFICSCDFLSFTQGQQALGRVLVDWPDDYRCDSPSHVRGQRVQDAR) enclose the LRRCT domain. Residues 588–608 (AAVVSAACCALFLVLLLTGVL) traverse the membrane as a helical segment. Over 609–784 (CHRFHGLWYM…WLNLRAAIRS (176 aa)) the chain is Cytoplasmic. The 144-residue stretch at 639–782 (ICYDAFVSYS…GFWLNLRAAI (144 aa)) folds into the TIR domain. A Glycyl lysine isopeptide (Lys-Gly) (interchain with G-Cter in ubiquitin) cross-link involves residue Lys754. The ATG16L1-binding motif signature appears at 761-778 (YLEWPVDETQQEGFWLNL).

This sequence belongs to the Toll-like receptor family. In terms of assembly, interacts with LY96, TLR1 and TLR6 (via extracellular domain). TLR2 seems to exist in heterodimers with either TLR1 or TLR6 before stimulation by the ligand. The heterodimers form bigger oligomers in response to their corresponding ligands as well as further heterotypic associations with other receptors such as CD14 and/or CD36. Binds MYD88 (via TIR domain). Interacts with TICAM1. Interacts with CNPY3. Interacts with ATG16L1. Interacts with PPP1R11. Interacts with TICAM2. Interacts with TIRAP. Post-translationally, ubiquitinated at Lys-754 by PPP1R11, leading to its degradation. Deubiquitinated by USP2. In terms of processing, glycosylation of Asn-442 is critical for secretion of the N-terminal ectodomain of TLR2.

Its subcellular location is the membrane. The protein localises to the cytoplasmic vesicle. It localises to the phagosome membrane. The protein resides in the membrane raft. Cooperates with LY96 to mediate the innate immune response to bacterial lipoproteins and other microbial cell wall components. Cooperates with TLR1 or TLR6 to mediate the innate immune response to bacterial lipoproteins or lipopeptides. Acts via MYD88 and TRAF6, leading to NF-kappa-B activation, cytokine secretion and the inflammatory response. May also promote apoptosis in response to lipoproteins. Forms activation clusters composed of several receptors depending on the ligand, these clusters trigger signaling from the cell surface and subsequently are targeted to the Golgi in a lipid-raft dependent pathway. Forms the cluster TLR2:TLR6:CD14:CD36 in response to diacylated lipopeptides and TLR2:TLR1:CD14 in response to triacylated lipopeptides. This Bison bison (American bison) protein is Toll-like receptor 2 (TLR2).